Reading from the N-terminus, the 704-residue chain is Polyribonucleotide nucleotidyltransferase (704 aa).

The Mg(2+) site is built by aspartate 488 and aspartate 494. A KH domain is found at proline 555–isoleucine 614. The S1 motif domain occupies glycine 624–lysine 692.

It belongs to the polyribonucleotide nucleotidyltransferase family. Component of the RNA degradosome, which is a multiprotein complex involved in RNA processing and mRNA degradation. Mg(2+) serves as cofactor.

It is found in the cytoplasm. It catalyses the reaction RNA(n+1) + phosphate = RNA(n) + a ribonucleoside 5'-diphosphate. Functionally, involved in mRNA degradation. Catalyzes the phosphorolysis of single-stranded polyribonucleotides processively in the 3'- to 5'-direction. In Shewanella halifaxensis (strain HAW-EB4), this protein is Polyribonucleotide nucleotidyltransferase.